The following is a 465-amino-acid chain: MLPLVALVGRPNVGKSTIFNALTRTRDALVHDQPGVTRDRNYGVCRLDEQQPFIVVDTGGIAGDEDGLAGATARQARAAAGEADLVLFVVDGREGESSLDDEILAWLRKLARPTVLVINKIDGTDEETVRSEFARYGFSDVVALSAAHRQGIDELLEEVGARLPEEGSGELLDNDPARVRIAFVGRPNVGKSTLVNRLLGEERMIASEVPGTTRDSIAVDLERDGRQYRLIDTAGLRRRGKVEEAVEKFSAFKTLQAIERCQVAVLMLDATEGVTDQDATILGAILDAGRALVVAINKWDGQSDYQRAQAEDLLSRKLGFVSWAEAVRISALHGSGMRELFQAIHRAHASATHEFSTSEVNQALEIAYETNPPPSIRGHVSKLRYVHPGGANPPTFIVHGTRLKVLPESYKRYLENFFRKRFKLVGTPVCFIFREGANPYEGKKNPLSDRQVARKRRLMRHVKGK.

EngA-type G domains lie at 3-167 (PLVA…PEEG) and 179-352 (VRIA…ASAT). Residues 9 to 16 (GRPNVGKS), 57 to 61 (DTGGI), 119 to 122 (NKID), 185 to 192 (GRPNVGKS), 232 to 236 (DTAGL), and 297 to 300 (NKWD) contribute to the GTP site. Residues 353 to 437 (HEFSTSEVNQ…PVCFIFREGA (85 aa)) form the KH-like domain.

Belongs to the TRAFAC class TrmE-Era-EngA-EngB-Septin-like GTPase superfamily. EngA (Der) GTPase family. In terms of assembly, associates with the 50S ribosomal subunit.

GTPase that plays an essential role in the late steps of ribosome biogenesis. This chain is GTPase Der, found in Xanthomonas oryzae pv. oryzae (strain MAFF 311018).